Reading from the N-terminus, the 398-residue chain is Na(+)/H(+) antiporter NhaA 2 (398 aa).

11 consecutive transmembrane segments (helical) span residues 17–37, 59–79, 95–115, 125–145, 154–174, 179–199, 213–233, 262–282, 288–308, 331–351, and 364–384; these read ILLMLAVAMAMLLANSPLAGL, LLLWVNDGLMALFFLLIGLEV, SLPTFAAIGGMVFPALVYLGF, GWAIPAATDIAFALGVLALLG, VFLLALAIIDDIGVIVIIALF, LSITSLVIAAIAIGSMVILNL, LLLWIAVLKSGVHATLAGVVI, FMILPLFAFANAGLSLSGMSL, PAALGVMLGLLLGKPLGVLLF, AVAVLCGVGFTMSIFISSLAF, and LGTLVGSMLSASIAYFWLTKV.

It belongs to the NhaA Na(+)/H(+) (TC 2.A.33) antiporter family.

The protein localises to the cell inner membrane. It catalyses the reaction Na(+)(in) + 2 H(+)(out) = Na(+)(out) + 2 H(+)(in). In terms of biological role, na(+)/H(+) antiporter that extrudes sodium in exchange for external protons. In Shewanella denitrificans (strain OS217 / ATCC BAA-1090 / DSM 15013), this protein is Na(+)/H(+) antiporter NhaA 2.